The following is a 61-amino-acid chain: MAKLQIKLVRSVIGTTPNQKKNVEALGLRKREQVVVKEDNAQTRGMINKVSHLLEVTEIAE.

Belongs to the universal ribosomal protein uL30 family. In terms of assembly, part of the 50S ribosomal subunit.

This is Large ribosomal subunit protein uL30 from Clostridioides difficile (strain 630) (Peptoclostridium difficile).